A 388-amino-acid polypeptide reads, in one-letter code: Na(+)/H(+) antiporter NhaA (388 aa).

Over 1–11 (MKHLHRFFSSD) the chain is Cytoplasmic. The chain crosses the membrane as a helical span at residues 12-31 (ASGGIILIIAAILAMIMANS). The Periplasmic portion of the chain corresponds to 32–58 (GATSGWYHDFLETPVQLRVGSLEINKN). A helical membrane pass occupies residues 59-80 (MLLWINDALMAVFFLLVGLEVK). Residues 81 to 96 (RELMQGSLASLRQAAF) lie on the Cytoplasmic side of the membrane. Residues 97-116 (PVIAAIGGMIVPALLYLAFN) traverse the membrane as a helical segment. Residues 117–122 (YADPIT) lie on the Periplasmic side of the membrane. A helical membrane pass occupies residues 123–130 (REGWAIPA). The Cytoplasmic portion of the chain corresponds to 131-154 (ATDIAFALGVLALLGSRVPLALKI). Residues 155–176 (FLMALAIIDDLGAIIIIALFYT) form a helical membrane-spanning segment. Over 177–180 (NDLS) the chain is Periplasmic. Residues 181–200 (MASLGVAAVAIAVLAVLNLC) traverse the membrane as a helical segment. The Cytoplasmic portion of the chain corresponds to 201-204 (GVRR). A helical membrane pass occupies residues 205-222 (TGVYILVGVVLWTAVLKS). Residue glycine 223 is a topological domain, periplasmic. Residues 224 to 236 (VHATLAGVIVGFF) form a helical membrane-spanning segment. Residues 237–253 (IPLKEKHGRSPAKRLEH) lie on the Cytoplasmic side of the membrane. The helical transmembrane segment at 254–272 (VLHPWVAYLILPLFAFANA) threads the bilayer. The Periplasmic portion of the chain corresponds to 273–286 (GVSLQGVTLDGLTS). A helical membrane pass occupies residues 287-310 (ILPLGIIAGLLIGKPLGISLFCWL). At 311-339 (ALRLKLAHLPEGTTYQQIMAVGILCGIGF) the chain is on the cytoplasmic side. Residues 340-350 (TMSIFIASLAF) form a helical membrane-spanning segment. At 351-357 (GSVDPEL) the chain is on the periplasmic side. The chain crosses the membrane as a helical span at residues 358-380 (INWAKLGILVGSISSAVIGYSWL). At 381–388 (RVRLRPSV) the chain is on the cytoplasmic side.

This sequence belongs to the NhaA Na(+)/H(+) (TC 2.A.33) antiporter family.

The protein resides in the cell inner membrane. It carries out the reaction Na(+)(in) + 2 H(+)(out) = Na(+)(out) + 2 H(+)(in). Its function is as follows. Na(+)/H(+) antiporter that extrudes sodium in exchange for external protons. The protein is Na(+)/H(+) antiporter NhaA of Escherichia coli O9:H4 (strain HS).